Here is a 619-residue protein sequence, read N- to C-terminus: Guanylate cyclase soluble subunit beta-1 (619 aa).

His-105 is a binding site for heme. The Guanylate cyclase domain occupies 421 to 554; sequence TILFSGIVGF…NTVNLTSRTE (134 aa).

It belongs to the adenylyl cyclase class-4/guanylyl cyclase family. As to quaternary structure, the active enzyme is formed by a heterodimer of an alpha and a beta subunit. Heterodimer with GUCY1A1. Can also form inactive homodimers in vitro. It depends on heme as a cofactor. In terms of tissue distribution, detected in brain cortex and cerebellum (at protein level).

It is found in the cytoplasm. The enzyme catalyses GTP = 3',5'-cyclic GMP + diphosphate. With respect to regulation, activated by nitric oxide in the presence of magnesium or manganese ions. Mediates responses to nitric oxide (NO) by catalyzing the biosynthesis of the signaling molecule cGMP. In Homo sapiens (Human), this protein is Guanylate cyclase soluble subunit beta-1.